Consider the following 178-residue polypeptide: Ribulose bisphosphate carboxylase small subunit, chloroplastic 4 (178 aa).

The N-terminal 54 residues, 1 to 54 (MASISSTVATVSRAAPAQANMVAPFTGLKSNAAFPATKKANDFSTLPSNGGRVQ), are a transit peptide targeting the chloroplast.

Belongs to the RuBisCO small chain family. Heterohexadecamer of 8 large and 8 small subunits.

Its subcellular location is the plastid. The protein localises to the chloroplast. RuBisCO catalyzes two reactions: the carboxylation of D-ribulose 1,5-bisphosphate, the primary event in carbon dioxide fixation, as well as the oxidative fragmentation of the pentose substrate. Both reactions occur simultaneously and in competition at the same active site. Although the small subunit is not catalytic it is essential for maximal activity. This is Ribulose bisphosphate carboxylase small subunit, chloroplastic 4 from Flaveria pringlei.